Consider the following 393-residue polypeptide: Pectate lyase A (393 aa).

An N-terminal signal peptide occupies residues 1–32; the sequence is MMNKASGRSFTRSSKYLLATLIAGMMASGVSA. Ca(2+) contacts are provided by E174, D176, D216, and D220. R273 is an active-site residue. C330 and C358 are oxidised to a cystine.

Belongs to the polysaccharide lyase 1 family. PLADES subfamily. It depends on Ca(2+) as a cofactor.

It is found in the secreted. The catalysed reaction is Eliminative cleavage of (1-&gt;4)-alpha-D-galacturonan to give oligosaccharides with 4-deoxy-alpha-D-galact-4-enuronosyl groups at their non-reducing ends.. Its pathway is glycan metabolism; pectin degradation; 2-dehydro-3-deoxy-D-gluconate from pectin: step 2/5. Functionally, involved in maceration and soft-rotting of plant tissue. This chain is Pectate lyase A (pelA), found in Dickeya chrysanthemi (Pectobacterium chrysanthemi).